Consider the following 202-residue polypeptide: Peptidyl-tRNA hydrolase (202 aa).

Y22 lines the tRNA pocket. H27 serves as the catalytic Proton acceptor. Residues F69, N71, and N117 each contribute to the tRNA site.

This sequence belongs to the PTH family. As to quaternary structure, monomer.

It is found in the cytoplasm. The enzyme catalyses an N-acyl-L-alpha-aminoacyl-tRNA + H2O = an N-acyl-L-amino acid + a tRNA + H(+). Hydrolyzes ribosome-free peptidyl-tRNAs (with 1 or more amino acids incorporated), which drop off the ribosome during protein synthesis, or as a result of ribosome stalling. Functionally, catalyzes the release of premature peptidyl moieties from peptidyl-tRNA molecules trapped in stalled 50S ribosomal subunits, and thus maintains levels of free tRNAs and 50S ribosomes. In Thiobacillus denitrificans (strain ATCC 25259 / T1), this protein is Peptidyl-tRNA hydrolase.